The following is a 1431-amino-acid chain: Probable ATP-dependent RNA helicase spindle-E (1431 aa).

The 168-residue stretch at 127–294 folds into the Helicase ATP-binding domain; the sequence is LAAIRENPVV…FAMSSSLPPV (168 aa). 140-147 contributes to the ATP binding site; that stretch reads GETGCGKT. A DEAH box motif is present at residues 240-243; sequence DEVH. Residues 354 to 526 form the Helicase C-terminal domain; sequence QSQQSYEEAK…NSVLKAKELE (173 aa). Residues 937–1000 enclose the Tudor domain; the sequence is AKAVTKGLQL…RLMSPQLKRD (64 aa).

It belongs to the DEAD box helicase family. DEAH subfamily.

The protein resides in the cytoplasm. The enzyme catalyses ATP + H2O = ADP + phosphate + H(+). In terms of biological role, probable ATP-binding RNA helicase which plays a central role during spermatogenesis and oogenesis by repressing transposable elements and preventing their mobilization, which is essential for the germline integrity. Acts via the piRNA metabolic process, which mediates the repression of transposable elements during meiosis by forming complexes composed of piRNAs and Piwi and govern the methylation and subsequent repression of transposons. Involved in the repression of LTR retrotransposon copia. Also involved in telomere regulation by repressing specialized telomeric retroelements HeT-A, TAHRE, and TART; Drosophila telomeres being maintained by transposition of specialized telomeric retroelements. Involved in telomeric trans-silencing, a repression mechanism by which a transposon or a transgene inserted in subtelomeric heterochromatin has the capacity to repress in trans in the female germline, a homologous transposon, or transgene located in euchromatin. Involved in the repression of testis-expressed Stellate genes by the homologous Su(Ste) repeats. Required for anteroposterior and dorsoventral axis formation during oogenesis. The polypeptide is Probable ATP-dependent RNA helicase spindle-E (spn-E) (Drosophila mojavensis (Fruit fly)).